Consider the following 501-residue polypeptide: Phase 2 flagellin (501 aa).

The protein belongs to the bacterial flagellin family.

It is found in the secreted. Its subcellular location is the bacterial flagellum. Its function is as follows. Flagellin is the subunit protein which polymerizes to form the filaments of bacterial flagella. This chain is Phase 2 flagellin (fljB), found in Salmonella abortus-equi.